Here is a 410-residue protein sequence, read N- to C-terminus: Translation initiation factor 2 subunit gamma (410 aa).

In terms of domain architecture, tr-type G spans glutamine 6–lysine 203. The segment at glycine 15 to threonine 22 is G1. Mg(2+) contacts are provided by aspartate 18, threonine 22, glycine 43, and serine 45. Aspartate 18–serine 23 contacts GTP. The segment at glycine 43–arginine 47 is G2. The Zn(2+) site is built by cysteine 58, cysteine 61, cysteine 73, and cysteine 76. The tract at residues aspartate 90–glycine 93 is G3. GTP contacts are provided by residues asparagine 146–aspartate 149 and serine 181–histidine 183. Residues asparagine 146–aspartate 149 are G4. Residues serine 181–histidine 183 form a G5 region.

It belongs to the TRAFAC class translation factor GTPase superfamily. Classic translation factor GTPase family. EIF2G subfamily. Heterotrimer composed of an alpha, a beta and a gamma chain. Mg(2+) is required as a cofactor.

The catalysed reaction is GTP + H2O = GDP + phosphate + H(+). Functionally, eIF-2 functions in the early steps of protein synthesis by forming a ternary complex with GTP and initiator tRNA. The sequence is that of Translation initiation factor 2 subunit gamma from Methanococcus maripaludis (strain C6 / ATCC BAA-1332).